The sequence spans 527 residues: Amine oxidase [flavin-containing] A (527 aa).

At Met1 the chain carries N-acetylmethionine. Topologically, residues 1–497 are cytoplasmic; it reads MERQEKANNA…RTFWERNLPS (497 aa). Ser383 bears the Phosphoserine mark. At Cys406 the chain carries S-8alpha-FAD cysteine. Residues 498–518 traverse the membrane as a helical; Anchor for type IV membrane protein segment; the sequence is VTGLLKIIGFSTSVTALWLAV. Over 519 to 527 the chain is Mitochondrial intermembrane; that stretch reads YKFRLLTRS. Residues 520–522 form an interaction with membrane phospholipid headgroups region; it reads KFR.

Belongs to the flavin monoamine oxidase family. As to quaternary structure, monomer, homo- or heterodimer (containing two subunits of similar size). Each subunit contains a covalently bound flavin. Enzymatically active as monomer. It depends on FAD as a cofactor.

The protein resides in the mitochondrion outer membrane. The catalysed reaction is a secondary aliphatic amine + O2 + H2O = a primary amine + an aldehyde + H2O2. The enzyme catalyses a primary methyl amine + O2 + H2O = an aldehyde + H2O2 + NH4(+). It carries out the reaction (R)-adrenaline + O2 + H2O = (R)-3,4-dihydroxymandelaldehyde + methylamine + H2O2. It catalyses the reaction dopamine + O2 + H2O = 3,4-dihydroxyphenylacetaldehyde + H2O2 + NH4(+). The catalysed reaction is tyramine + O2 + H2O = (4-hydroxyphenyl)acetaldehyde + H2O2 + NH4(+). The enzyme catalyses (R)-noradrenaline + O2 + H2O = (R)-3,4-dihydroxymandelaldehyde + H2O2 + NH4(+). It carries out the reaction serotonin + O2 + H2O = (5-hydroxyindol-3-yl)acetaldehyde + H2O2 + NH4(+). It catalyses the reaction kynuramine + O2 + H2O = 3-(2-aminophenyl)-3-oxopropanal + H2O2 + NH4(+). The catalysed reaction is tryptamine + O2 + H2O = indole-3-acetaldehyde + H2O2 + NH4(+). The enzyme catalyses 2-phenylethylamine + O2 + H2O = 2-phenylacetaldehyde + H2O2 + NH4(+). Functionally, catalyzes the oxidative deamination of primary and some secondary amine such as neurotransmitters, with concomitant reduction of oxygen to hydrogen peroxide and has important functions in the metabolism of neuroactive and vasoactive amines in the central nervous system and peripheral tissues. Preferentially oxidizes serotonin. Also catalyzes the oxidative deamination of kynuramine to 3-(2-aminophenyl)-3-oxopropanal that can spontaneously condense to 4-hydroxyquinoline. This chain is Amine oxidase [flavin-containing] A, found in Sus scrofa (Pig).